The sequence spans 357 residues: Protein ATP1B4 (357 aa).

Topologically, residues 1–110 (MRRQLRSRRA…FLARTGQSWS (110 aa)) are nuclear. Residues 15-80 (YSYRYRLDDP…EEGQGQPTGN (66 aa)) form a disordered region. The span at 52–73 (EEEEEEEEKEEEEEEEKEEEEG) shows a compositional bias: acidic residues. The helical; Signal-anchor for type II membrane protein transmembrane segment at 111–131 (LILLIYFFFYASLAAVITLCM) threads the bilayer. Residues 132–357 (YTLFLTISPY…RVIFTLNIET (226 aa)) are Perinuclear space-facing.

The protein belongs to the X(+)/potassium ATPases subunit beta family. In terms of assembly, associates with a SMAD7-transcriptional complex. Interacts with SNW1 and TOR1AIP1. According to PubMed:17592128, does not associate with known Na,K-ATPase alpha-subunits. As to expression, highly expressed in skeletal muscle and at a lower level in heart.

The protein localises to the nucleus inner membrane. Its function is as follows. May act as a transcriptional coregulator during muscle development through its interaction with SNW1. Has lost its ancestral function as a Na,K-ATPase beta-subunit. The chain is Protein ATP1B4 (ATP1B4) from Homo sapiens (Human).